Consider the following 351-residue polypeptide: AA9 family lytic polysaccharide monooxygenase A (351 aa).

The N-terminal stretch at 1–20 is a signal peptide; sequence MSNKAATLLAALSGAALVAA. Cu(2+) is bound by residues His-21 and His-107. Cysteines 76 and 196 form a disulfide. Residues His-182 and Gln-191 each contribute to the O2 site. Cu(2+) is bound at residue Tyr-193. A CBM1 domain is found at 315–351; that stretch reads GVAPKWGQCGGNGWTGPTVCASGSTCTVLNPYYSQCI.

Belongs to the polysaccharide monooxygenase AA9 family. It depends on Cu(2+) as a cofactor.

It localises to the secreted. The catalysed reaction is [(1-&gt;4)-beta-D-glucosyl]n+m + reduced acceptor + O2 = 4-dehydro-beta-D-glucosyl-[(1-&gt;4)-beta-D-glucosyl]n-1 + [(1-&gt;4)-beta-D-glucosyl]m + acceptor + H2O.. Lytic polysaccharide monooxygenase (LPMO) that depolymerizes crystalline and amorphous polysaccharides via the oxidation of scissile alpha- or beta-(1-4)-glycosidic bonds, yielding C1 and C4 oxidation products. Catalysis by LPMOs requires the reduction of the active-site copper from Cu(II) to Cu(I) by a reducing agent and H(2)O(2) or O(2) as a cosubstrate. This Podospora anserina (strain S / ATCC MYA-4624 / DSM 980 / FGSC 10383) (Pleurage anserina) protein is AA9 family lytic polysaccharide monooxygenase A.